The following is a 169-amino-acid chain: S-ribosylhomocysteine lyase (169 aa).

Fe cation is bound by residues H54, H58, and C128.

The protein belongs to the LuxS family. Homodimer. Fe cation serves as cofactor.

It carries out the reaction S-(5-deoxy-D-ribos-5-yl)-L-homocysteine = (S)-4,5-dihydroxypentane-2,3-dione + L-homocysteine. Functionally, involved in the synthesis of autoinducer 2 (AI-2) which is secreted by bacteria and is used to communicate both the cell density and the metabolic potential of the environment. The regulation of gene expression in response to changes in cell density is called quorum sensing. Catalyzes the transformation of S-ribosylhomocysteine (RHC) to homocysteine (HC) and 4,5-dihydroxy-2,3-pentadione (DPD). This Tolumonas auensis (strain DSM 9187 / NBRC 110442 / TA 4) protein is S-ribosylhomocysteine lyase.